Reading from the N-terminus, the 1257-residue chain is Phosphatidylinositol 3,4,5-trisphosphate 5-phosphatase 2 (1257 aa).

One can recognise an SH2 domain in the interval 21–117 (WYHRDLSRAA…GLVCALLLPV (97 aa)). Positions 119–132 (GEREPDPPDDRDAS) are enriched in basic and acidic residues. Positions 119–181 (GEREPDPPDD…ESTPNGLSTV (63 aa)) are disordered. Residue S132 is modified to Phosphoserine. Positions 156–166 (PSSPLPAPETP) are enriched in pro residues. T165 bears the Phosphothreonine mark. Phosphoserine is present on residues S241 and S353. Y887 is subject to Phosphotyrosine. The residue at position 891 (S891) is a Phosphoserine. The segment at 897–986 (TGAKSKAPSV…PPKNSFNNPA (90 aa)) is disordered. Pro residues predominate over residues 939-951 (PPPTGRPPAPPRA). An SH3-binding motif is present at residues 945-950 (PPAPPR). A compositionally biased stretch (basic and acidic residues) spans 952–966 (VPREESLNPRLKSEG). Residues 984–987 (NPAY) carry the NPXY motif motif. Y987 carries the phosphotyrosine modification. Residues 1004–1115 (SFARAPIPPT…PASTFLEEVA (112 aa)) are disordered. 2 stretches are compositionally biased toward pro residues: residues 1049–1060 (LPPPDFPPPPLP) and 1088–1104 (GPPP…PPGT). Phosphoserine is present on S1132. Y1136 and Y1161 each carry phosphotyrosine. Residues 1195–1257 (LGEAGMGAWL…LLLDTLQLSK (63 aa)) enclose the SAM domain. S1256 carries the post-translational modification Phosphoserine.

The protein belongs to the inositol 1,4,5-trisphosphate 5-phosphatase family. In terms of assembly, interacts with tyrosine phosphorylated form of SHC1. Interacts with EGFR. Upon stimulation by the EGF signaling pathway, it forms a complex with SHC1 and EGFR. Interacts with cytoskeletal protein SORBS3/vinexin, promoting its localization to the periphery of cells. Forms a complex with filamin (FLNA or FLNB), actin, GPIb (GP1BA or GP1BB) that regulates cortical and submembraneous actin. Interacts with c-Met/MET, when c-Met/MET is phosphorylated on 'Tyr-1356'. Interacts with p130Cas/BCAR1. Interacts with CENTD3/ARAP3 via its SAM domain. Interacts with c-Cbl/CBL and CAP/SORBS1. Interacts with activated EPHA2 receptor. Interacts with receptors FCGR2A. Interacts with FCGR2B. Interacts with tyrosine kinase ABL1. Interacts with tyrosine kinase TEC. Interacts with CSF1R. Interacts (via N-terminus) with SH3YL1 (via SH3 domain). Interacts (via SH2 domain) with tyrosine phosphorylated KLRC1 (via ITIM). Interacts with NEDD9/HEF1. In terms of processing, tyrosine phosphorylated by the members of the SRC family after exposure to a diverse array of extracellular stimuli such as insulin, growth factors such as EGF or PDGF, chemokines, integrin ligands and hypertonic and oxidative stress. May be phosphorylated upon IgG receptor FCGR2B-binding. Phosphorylated at Tyr-987 following cell attachment and spreading. Phosphorylated at Tyr-1161 following EGF signaling pathway stimulation.

It is found in the cytoplasm. Its subcellular location is the cytosol. The protein localises to the cytoskeleton. It localises to the membrane. The protein resides in the cell projection. It is found in the filopodium. Its subcellular location is the lamellipodium. The protein localises to the basal cell membrane. It localises to the nucleus. The protein resides in the nucleus speckle. It is found in the spindle pole. The enzyme catalyses a 1,2-diacyl-sn-glycero-3-phospho-(1D-myo-inositol-3,4,5-trisphosphate) + H2O = a 1,2-diacyl-sn-glycero-3-phospho-(1D-myo-inositol-3,4-bisphosphate) + phosphate. It carries out the reaction 1,2-dioctanoyl-sn-glycero-3-phospho-(1D-myo-inositol-3,4,5-trisphosphate) + H2O = 1,2-dioctanoyl-sn-glycero-3-phospho-(1D-myo-inositol-3,4-bisphosphate) + phosphate. It catalyses the reaction 1,2-dihexadecanoyl-sn-glycero-3-phospho-(1D-myo-inositol-3,4,5-trisphosphate) + H2O = 1,2-dihexadecanoyl-sn-glycero-3-phospho-(1D-myo-inositol-3,4-bisphosphate) + phosphate. Its activity is regulated as follows. Activated upon translocation to the sites of synthesis of PtdIns(3,4,5)P3 in the membrane. Enzymatic activity is enhanced in the presence of phosphatidylserine. Functionally, phosphatidylinositol (PtdIns) phosphatase that specifically hydrolyzes the 5-phosphate of phosphatidylinositol-3,4,5-trisphosphate (PtdIns(3,4,5)P3) to produce PtdIns(3,4)P2, thereby negatively regulating the PI3K (phosphoinositide 3-kinase) pathways. Required for correct mitotic spindle orientation and therefore progression of mitosis. Plays a central role in regulation of PI3K-dependent insulin signaling, although the precise molecular mechanisms and signaling pathways remain unclear. While overexpression reduces both insulin-stimulated MAP kinase and Akt activation, its absence does not affect insulin signaling or GLUT4 trafficking. Confers resistance to dietary obesity. May act by regulating AKT2, but not AKT1, phosphorylation at the plasma membrane. Part of a signaling pathway that regulates actin cytoskeleton remodeling. Required for the maintenance and dynamic remodeling of actin structures as well as in endocytosis, having a major impact on ligand-induced EGFR internalization and degradation. Participates in regulation of cortical and submembraneous actin by hydrolyzing PtdIns(3,4,5)P3 thereby regulating membrane ruffling. Regulates cell adhesion and cell spreading. Required for HGF-mediated lamellipodium formation, cell scattering and spreading. Acts as a negative regulator of EPHA2 receptor endocytosis by inhibiting via PI3K-dependent Rac1 activation. Acts as a regulator of neuritogenesis by regulating PtdIns(3,4,5)P3 level and is required to form an initial protrusive pattern, and later, maintain proper neurite outgrowth. Acts as a negative regulator of the FC-gamma-RIIA receptor (FCGR2A). Mediates signaling from the FC-gamma-RIIB receptor (FCGR2B), playing a central role in terminating signal transduction from activating immune/hematopoietic cell receptor systems. Involved in EGF signaling pathway. Upon stimulation by EGF, it is recruited by EGFR and dephosphorylates PtdIns(3,4,5)P3. Plays a negative role in regulating the PI3K-PKB pathway, possibly by inhibiting PKB activity. Down-regulates Fc-gamma-R-mediated phagocytosis in macrophages independently of INPP5D/SHIP1. In macrophages, down-regulates NF-kappa-B-dependent gene transcription by regulating macrophage colony-stimulating factor (M-CSF)-induced signaling. Plays a role in the localization of AURKA and NEDD9/HEF1 to the basolateral membrane at interphase in polarized cysts, thereby mediates cell cycle homeostasis, cell polarization and cilia assembly. Additionally promotion of cilia growth is also facilitated by hydrolysis of (PtdIns(3,4,5)P3) to PtdIns(3,4)P2. Promotes formation of apical membrane-initiation sites during the initial stages of lumen formation via Rho family-induced actin filament organization and CTNNB1 localization to cell-cell contacts. May also hydrolyze PtdIns(1,3,4,5)P4, and could thus affect the levels of the higher inositol polyphosphates like InsP6. Involved in endochondral ossification. The polypeptide is Phosphatidylinositol 3,4,5-trisphosphate 5-phosphatase 2 (Rattus norvegicus (Rat)).